We begin with the raw amino-acid sequence, 1505 residues long: Myosin-6 (1505 aa).

Residues 8–57 (SVGSFVWVEDPDEAWIDGEVVQVNGDEIKVLCTSGKHVVTKISNAYPKDV) form the Myosin N-terminal SH3-like domain. Residues 62-731 (SGVDDMTRLA…QMADLDTRRT (670 aa)) form the Myosin motor domain. Residues 156–163 (GESGAGKT) and 209–217 (NNNSSRFGK) each bind ATP. Actin-binding stretches follow at residues 495-529 (LIEK…YQTF), 531-554 (THKR…AGDV), 589-612 (FPPM…KQQL), and 612-634 (LVSL…KPNN). 6 IQ domains span residues 734–763 (LGRS…SAKQ), 757–786 (LRNS…EAAA), 782–811 (REAA…AAVS), 805–834 (LYSA…TKAA), 830–859 (QTKA…AAIT), and 853–882 (LKKA…AARE). Residues 883–1048 (TGALQAAKNK…AEKKIMHQQT (166 aa)) are a coiled coil. A Dilute domain is found at 1148-1452 (DRLIQMIGSA…ISSMRTLMTE (305 aa)).

It belongs to the TRAFAC class myosin-kinesin ATPase superfamily. Myosin family. Plant myosin class XI subfamily. Homodimer. Interacts with RABC2A and RABD1. In terms of tissue distribution, expressed in flowers, leaves, roots and stems.

It localises to the cytoplasm. Functionally, myosin heavy chain that is required for the cell cycle-regulated transport of various organelles and proteins for their segregation. Functions by binding with its tail domain to receptor proteins on organelles and exerting force with its N-terminal motor domain against actin filaments, thereby transporting its cargo along polarized actin cables. Involved in the tip growth of root hair cells. Plays a major role in trafficking of Golgi stacks, mitochondria and peroxisomes during root hair development. Targets the peroxisome through an interaction with RABC2A. Required for development of pavement cells, trichomes, and stigmatic papillae. The chain is Myosin-6 (XI-2) from Arabidopsis thaliana (Mouse-ear cress).